We begin with the raw amino-acid sequence, 155 residues long: Protein E6 (155 aa).

2 zinc fingers span residues 33 to 69 (CVYC…CRVC) and 106 to 142 (CYRC…CLQC).

It belongs to the papillomaviridae E6 protein family. In terms of assembly, forms homodimers. Interacts with ubiquitin-protein ligase UBE3A/E6-AP; this interaction stimulates UBE3A ubiquitin activity. Interacts with host TP53 and EP300; this interaction inhibits TP53 activity.

It localises to the host cytoplasm. Its subcellular location is the host nucleus. Plays a major role in the induction and maintenance of cellular transformation. E6 associates with host UBE3A/E6-AP ubiquitin-protein ligase and modulates its activity. Sequesters tumor suppressor TP53 in the host cytoplasm and modulates its activity by interacting with host EP300 that results in the reduction of TP53 acetylation and activation. In turn, apoptosis induced by DNA damage is inhibited. E6 also protects host keratinocytes from apoptosis by mediating the degradation of host BAK1. May also inhibit host immune response. The polypeptide is Protein E6 (Homo sapiens (Human)).